The primary structure comprises 122 residues: Small ribosomal subunit protein uS10y (122 aa).

This sequence belongs to the universal ribosomal protein uS10 family.

The protein is Small ribosomal subunit protein uS10y (RPS20B) of Arabidopsis thaliana (Mouse-ear cress).